Reading from the N-terminus, the 57-residue chain is Potassium channel toxin alpha-KTx 1.5 (57 aa).

A signal peptide spans 1 to 20 (MKISFLLLALVICSIGWSEA). Gln21 carries the pyrrolidone carboxylic acid modification. 3 cysteine pairs are disulfide-bonded: Cys27-Cys48, Cys33-Cys53, and Cys37-Cys55.

Belongs to the short scorpion toxin superfamily. Potassium channel inhibitor family. Alpha-KTx 01 subfamily. Expressed by the venom gland.

The protein resides in the secreted. Its function is as follows. Potent blocker of both large-conductance calcium-activated potassium channels (KCa1.1/KCNMA1) and voltage-gated potassium channels (Kv1.3/KCNA3). Has also been shown to moderately inhibit Kv1.2/KCNA2 and weakly inhibit Kv1.1/KCNA1 channels, as well as 5-hydroxytryptamine 3 receptors (HTR3A). This chain is Potassium channel toxin alpha-KTx 1.5, found in Olivierus martensii (Manchurian scorpion).